The sequence spans 602 residues: Elongation factor 4 (602 aa).

Positions 7 to 189 (KKIRNFSIIA…SIVKNVPSPK (183 aa)) constitute a tr-type G domain. Residues 19-24 (DHGKST) and 136-139 (NKID) contribute to the GTP site.

It belongs to the TRAFAC class translation factor GTPase superfamily. Classic translation factor GTPase family. LepA subfamily.

The protein localises to the cell membrane. It carries out the reaction GTP + H2O = GDP + phosphate + H(+). In terms of biological role, required for accurate and efficient protein synthesis under certain stress conditions. May act as a fidelity factor of the translation reaction, by catalyzing a one-codon backward translocation of tRNAs on improperly translocated ribosomes. Back-translocation proceeds from a post-translocation (POST) complex to a pre-translocation (PRE) complex, thus giving elongation factor G a second chance to translocate the tRNAs correctly. Binds to ribosomes in a GTP-dependent manner. The chain is Elongation factor 4 from Alkaliphilus oremlandii (strain OhILAs) (Clostridium oremlandii (strain OhILAs)).